A 259-amino-acid chain; its full sequence is Imidazole glycerol phosphate synthase subunit HisF (259 aa).

Catalysis depends on residues Asp-11 and Asp-130.

The protein belongs to the HisA/HisF family. In terms of assembly, heterodimer of HisH and HisF.

The protein resides in the cytoplasm. The enzyme catalyses 5-[(5-phospho-1-deoxy-D-ribulos-1-ylimino)methylamino]-1-(5-phospho-beta-D-ribosyl)imidazole-4-carboxamide + L-glutamine = D-erythro-1-(imidazol-4-yl)glycerol 3-phosphate + 5-amino-1-(5-phospho-beta-D-ribosyl)imidazole-4-carboxamide + L-glutamate + H(+). It participates in amino-acid biosynthesis; L-histidine biosynthesis; L-histidine from 5-phospho-alpha-D-ribose 1-diphosphate: step 5/9. Functionally, IGPS catalyzes the conversion of PRFAR and glutamine to IGP, AICAR and glutamate. The HisF subunit catalyzes the cyclization activity that produces IGP and AICAR from PRFAR using the ammonia provided by the HisH subunit. The sequence is that of Imidazole glycerol phosphate synthase subunit HisF from Shewanella amazonensis (strain ATCC BAA-1098 / SB2B).